Here is a 197-residue protein sequence, read N- to C-terminus: ATP-dependent Clp protease proteolytic subunit 1 (197 aa).

Residue serine 96 is the Nucleophile of the active site. Residue histidine 121 is part of the active site.

The protein belongs to the peptidase S14 family. In terms of assembly, fourteen ClpP subunits assemble into 2 heptameric rings which stack back to back to give a disk-like structure with a central cavity, resembling the structure of eukaryotic proteasomes.

It is found in the cytoplasm. The enzyme catalyses Hydrolysis of proteins to small peptides in the presence of ATP and magnesium. alpha-casein is the usual test substrate. In the absence of ATP, only oligopeptides shorter than five residues are hydrolyzed (such as succinyl-Leu-Tyr-|-NHMec, and Leu-Tyr-Leu-|-Tyr-Trp, in which cleavage of the -Tyr-|-Leu- and -Tyr-|-Trp bonds also occurs).. Functionally, cleaves peptides in various proteins in a process that requires ATP hydrolysis. Has a chymotrypsin-like activity. Plays a major role in the degradation of misfolded proteins. The sequence is that of ATP-dependent Clp protease proteolytic subunit 1 from Synechococcus sp. (strain CC9902).